Consider the following 463-residue polypeptide: Dialkyldecalin synthase (463 aa).

Residues V13, 32-33 (ER), I121, and D275 each bind FAD.

It belongs to the PheA/TfdB FAD monooxygenase family. In terms of assembly, homodimer. Requires FAD as cofactor.

It carries out the reaction 4-[(2E,7S,8E,10E,13R,14R,16E,18E)-14-ethyl-7,13-dihydroxy-2,16,18-trimethylicosa-2,8,10,16,18-pentaenoyl]-2-methylidene-5-oxo-2,5-dihydro-1H-pyrrol-3-olate = 4-[(1R,2R,4aS,5S,8aR)-2-[(2R,3R,5E,7E)-3-ethyl-2-hydroxy-5,7-dimethylnona-5,7-dien-1-yl]-5-hydroxy-1-methyl-1,2,4a,5,6,7,8,8a-octahydronaphthalene-1-carbonyl]-2-methylidene-5-oxo-2,5-dihydro-1H-pyrrol-3-olate. The protein operates within antibiotic biosynthesis. Involved in the biosynthesis of the spirotetramate antibiotics pyrroindomycins. Catalyzes the intramolecular cyclization forming the dialkyldecalin moiety in pyrroindomycins, via an endo-selective [4+2] cycloaddition reaction. The protein is Dialkyldecalin synthase of Streptomyces rugosporus.